We begin with the raw amino-acid sequence, 1349 residues long: Indole-3-acetaldehyde oxidase (1349 aa).

One can recognise a 2Fe-2S ferredoxin-type domain in the interval 7 to 94 (AAVVLAVNGK…RCSVTTSEGI (88 aa)). Positions 46, 51, and 54 each coordinate [2Fe-2S] cluster. The region spanning 237 to 415 (VPVSDDGWYR…LSIFIPEWGS (179 aa)) is the FAD-binding PCMH-type domain.

It belongs to the xanthine dehydrogenase family. As to quaternary structure, aldehyde oxidases (AO) are homodimers and heterodimers of AO subunits. The cofactor is [2Fe-2S] cluster. Requires FAD as cofactor. Mo-molybdopterin serves as cofactor. Mostly expressed in coleoptiles, and, to a lower extent, in mesocotyl and roots.

The protein localises to the cytoplasm. The enzyme catalyses indole-3-acetaldehyde + O2 + H2O = (indol-3-yl)acetate + H2O2 + H(+). Functionally, in higher plants aldehyde oxidases (AO) appear to be homo- and heterodimeric assemblies of AO subunits with probably different physiological functions. Involved in the biosynthesis of auxin. This Zea mays (Maize) protein is Indole-3-acetaldehyde oxidase (AO2).